The sequence spans 358 residues: 5,10-methenyltetrahydromethanopterin hydrogenase (358 aa).

The protein belongs to the HMD family. Homotetramer.

It carries out the reaction 5,10-methenyl-5,6,7,8-tetrahydromethanopterin + H2 = 5,10-methylenetetrahydromethanopterin + H(+). The protein operates within one-carbon metabolism; methanogenesis from CO(2); 5,10-methylene-5,6,7,8-tetrahydromethanopterin from 5,10-methenyl-5,6,7,8-tetrahydromethanopterin (hydrogen route): step 1/1. With respect to regulation, activity requires salt; 100 mM potassium phosphate, potassium chloride, and sodium chloride are equally effective. Catalyzes the reversible reduction of methenyl-H(4)MPT(+) to methylene-H(4)MPT. The chain is 5,10-methenyltetrahydromethanopterin hydrogenase from Methanopyrus kandleri (strain AV19 / DSM 6324 / JCM 9639 / NBRC 100938).